A 299-amino-acid polypeptide reads, in one-letter code: GTPase Era (299 aa).

Residues 9–177 enclose the Era-type G domain; sequence RSGSVAVIGR…VGDLLKLVPE (169 aa). The G1 stretch occupies residues 17-24; sequence GRPNVGKS. 17 to 24 contributes to the GTP binding site; that stretch reads GRPNVGKS. Residues 43-47 are G2; that stretch reads QTTRH. The segment at 64–67 is G3; sequence DTPG. GTP contacts are provided by residues 64-68 and 126-129; these read DTPGL and NKVD. Residues 126-129 are G4; sequence NKVD. A G5 region spans residues 156-158; the sequence is VSA. Residues 200–284 form the KH type-2 domain; the sequence is VREQLMRQLG…FLETWVRVRE (85 aa).

The protein belongs to the TRAFAC class TrmE-Era-EngA-EngB-Septin-like GTPase superfamily. Era GTPase family. As to quaternary structure, monomer.

The protein localises to the cytoplasm. Its subcellular location is the cell inner membrane. An essential GTPase that binds both GDP and GTP, with rapid nucleotide exchange. Plays a role in 16S rRNA processing and 30S ribosomal subunit biogenesis and possibly also in cell cycle regulation and energy metabolism. The polypeptide is GTPase Era (Xanthomonas oryzae pv. oryzae (strain MAFF 311018)).